We begin with the raw amino-acid sequence, 434 residues long: MREAHPIERAVGMAYYASDSDGTGGRLRDSPADFRVRELEAFDTQPADAPTGDYPWLVVRATLHEWDTNDFARELANTVGMSRERVRWAGTKDRHAVTTQLFAVRDLDAAQVPEIRNADIEVVGRAGRGLEFGDLAGNAFEIVVRDPDAPERAAAVADELAAFGGGTVGTPNYFGQQRFGSKRPVTHEVGLAILRDDWEAAAMAYLGAPTEHEPADSQRAREYVAETRDWTGALAEFPQRLRYERTMLHELADGGSFRDAVETFPSNLQQLFVHAAQSYVFNRIVSERMARGLPFGEPVAGDVVWFADSDADAAVAQPDAARQQRVTDSRVDVMARHCERGRAFVTAPLVGTDTEFADGDPGEITRGVLDDLGLSRADFDLPGEFDSAGSRRAILLRPDLTVSHDPLAFEFALPSGSYATVVLREFLKPSPLAL.

Aspartate 93 acts as the Nucleophile in catalysis. One can recognise a TRUD domain in the interval 169-396 (GTPNYFGQQR…SAGSRRAILL (228 aa)).

This sequence belongs to the pseudouridine synthase TruD family.

It carries out the reaction uridine(13) in tRNA = pseudouridine(13) in tRNA. Its function is as follows. Could be responsible for synthesis of pseudouridine from uracil-13 in transfer RNAs. This Halobacterium salinarum (strain ATCC 29341 / DSM 671 / R1) protein is Probable tRNA pseudouridine synthase D.